Here is a 222-residue protein sequence, read N- to C-terminus: CEACAM1-like protein UL7 (222 aa).

N-linked (GlcNAc...) asparagine; by host glycosylation is found at asparagine 50, asparagine 56, asparagine 60, asparagine 71, asparagine 105, asparagine 109, asparagine 125, asparagine 132, asparagine 147, asparagine 164, asparagine 168, and asparagine 189. The chain crosses the membrane as a helical span at residues 193–213 (LALVGVIVFIALIVVCIMGWW).

It belongs to the RL11 family. As to quaternary structure, interacts with host FLT3. Highly glycosylated.

It is found in the secreted. It localises to the host cell membrane. In terms of biological role, plays a role in modulating the host immune response and affecting host cytokine production. Structurally and functionally homolog of host CEACAM1, induces endothelial cell angiogenesis. Ligands for host FLT3 receptor, activates the PI3K/AKT and MAPK/ERK pathways. In turn, triggers hematopoietic progenitor cell and monocyte differentiation leading to virus reactivation. This chain is CEACAM1-like protein UL7 (UL7), found in Human cytomegalovirus (strain AD169) (HHV-5).